The following is a 371-amino-acid chain: Leu/Ile/Val-binding protein homolog 1 (371 aa).

An N-terminal signal peptide occupies residues 1-23; the sequence is MRKTLFSGVALAAVIAFGGSAWA.

Belongs to the leucine-binding protein family.

Its function is as follows. Component of an amino-acid transport system. This Brucella abortus (strain 2308) protein is Leu/Ile/Val-binding protein homolog 1.